The sequence spans 61 residues: [Thr6]-bradykinyl-Val,Asp (61 aa).

An N-terminal signal peptide occupies residues 1-22; the sequence is MSFLKKSLFLVLFLGLVSFSIC. The propeptide occupies 23-50; the sequence is EEEKRETEEEENEDEMDKESEEKRESPE. A disordered region spans residues 24-61; the sequence is EEKRETEEEENEDEMDKESEEKRESPERPPGFTPFRVD. The segment covering 30 to 41 has biased composition (acidic residues); the sequence is EEEENEDEMDKE. A 4-hydroxyproline; in form [Hyp3,Thr6]-bradykinyl-Val,Asp and [Hyp3,Thr6]-bradykinin modification is found at proline 53.

Belongs to the frog skin active peptide (FSAP) family. Bradykinin-related peptide subfamily. In terms of tissue distribution, expressed by the skin glands.

It localises to the secreted. Induces relaxation of rat smooth muscle from tail artery (EC(50)=16.8 nM) and contraction of that from ileum (EC(50)=205 nM), urinary bladder (EC(50)=895 nM) and uterus (EC(50)=60.3 nM). Binds to both bradykinin receptor B1 (BDKRB1) and B2 (BDKRB2). Its function is as follows. [Hyp3,Thr6]-bradykinin: Induces relaxation of rat smooth muscle from tail artery (EC(50)=56.7 nM) and contraction of that from ileum (EC(50)=588 nM), urinary bladder (EC(50)=4.6 uM) and uterus (EC(50)=3.9 nM). Binds to both bradykinin receptor B1 (BDKRB1) and B2 (BDKRB2). In arterial smooth muscle, the effect via BDKRB1 is stronger, in uterus, ileum and urinary bladder that via BDKRB2. In terms of biological role, induces relaxation of rat smooth muscle from tail artery (EC(50)=10.8 nM) and contraction of that from ileum (EC(50)=645 nM), urinary bladder (EC(50)=1.1 uM) and uterus (EC(50)=1.2 uM). Binds to both bradykinin receptor B1 (BDKRB1) and B2 (BDKRB2). Apart from uterus smooth muscle, the effect via B2 is stronger. Functionally, [Hyp3,Thr6]-bradykinyl-Val,Asp: Induces relaxation of rat smooth muscle from tail artery (EC(50)=3.5 nM) and contraction of that from ileum (EC(50)=223 nM), urinary bladder (EC(50)=1.5 uM) and uterus (EC(50)=356 nM). Binds to both bradykinin receptor B1 (BDKRB1) and B2 (BDKRB2); the effects via B2 a stronger. This Agalychnis callidryas (Red-eyed tree frog) protein is [Thr6]-bradykinyl-Val,Asp.